Here is a 360-residue protein sequence, read N- to C-terminus: Vignain (360 aa).

Residues 1–20 form the signal peptide; sequence MQKFILLALSLALVLAITES. The propeptide at 21–124 is activation peptide; it reads FDFHEKELES…NGTFMYEKVD (104 aa). N115 is a glycosylation site (N-linked (GlcNAc...) asparagine). Disulfide bonds link C147–C189, C181–C222, and C280–C332. C150 is a catalytic residue. Catalysis depends on residues H286 and N307. Residues 341 to 360 are disordered; that stretch reads PIKKSSNNPSGIKSSPKDEL. Polar residues predominate over residues 344 to 353; the sequence is KSSNNPSGIK. The propeptide at 354–360 is removed in mature form; the sequence is SSPKDEL. The prevents secretion from ER stretch occupies residues 357-360; that stretch reads KDEL.

The protein belongs to the peptidase C1 family. In terms of processing, the potential N-glycosylation site at Asn-115 is not glycosylated.

It is found in the cytoplasmic vesicle. With respect to regulation, low pH triggers activation of the protease and removal of the propeptide and the KDEL motif. Functionally, involved in programmed cell death. Shows a pronounced preference for hydrophobic residues in the P2 position and no obvious preference in the P1 position of the cleavage site. Accepts proline at the P1 and P1' positions. In Ricinus communis (Castor bean), this protein is Vignain (CYSEP).